Consider the following 278-residue polypeptide: Pantothenate synthetase (278 aa).

28–35 (MGNLHAGH) lines the ATP pocket. The active-site Proton donor is histidine 35. Glutamine 59 provides a ligand contact to (R)-pantoate. Glutamine 59 serves as a coordination point for beta-alanine. 145-148 (GKKD) contacts ATP. Glutamine 151 contacts (R)-pantoate. 182–185 (LSSR) contacts ATP.

It belongs to the pantothenate synthetase family. Homodimer.

It localises to the cytoplasm. It catalyses the reaction (R)-pantoate + beta-alanine + ATP = (R)-pantothenate + AMP + diphosphate + H(+). Its pathway is cofactor biosynthesis; (R)-pantothenate biosynthesis; (R)-pantothenate from (R)-pantoate and beta-alanine: step 1/1. Catalyzes the condensation of pantoate with beta-alanine in an ATP-dependent reaction via a pantoyl-adenylate intermediate. The protein is Pantothenate synthetase of Methylobacillus flagellatus (strain ATCC 51484 / DSM 6875 / VKM B-1610 / KT).